The sequence spans 183 residues: MESSQMSNVFHATTIVCVRRGDKVAIAGDGQVTLGHTVMKSNARKVRRLGRDGQVLAGFAGAAADAFTLFELFEAKLEKHGQLSRAAVELAKDWRTERRLGKLEALLVVADKETSLVISGTGDVIEPEDGIVAIGSGGSYALSAARALMAHTALDARTIATEAIGIAGNICIYTNRNVVVDEL.

The active site involves Thr-13. Residues Gly-168, Cys-171, and Thr-174 each contribute to the Na(+) site.

This sequence belongs to the peptidase T1B family. HslV subfamily. As to quaternary structure, a double ring-shaped homohexamer of HslV is capped on each side by a ring-shaped HslU homohexamer. The assembly of the HslU/HslV complex is dependent on binding of ATP.

The protein localises to the cytoplasm. It carries out the reaction ATP-dependent cleavage of peptide bonds with broad specificity.. With respect to regulation, allosterically activated by HslU binding. Its function is as follows. Protease subunit of a proteasome-like degradation complex believed to be a general protein degrading machinery. The polypeptide is ATP-dependent protease subunit HslV (Xylella fastidiosa (strain M23)).